The chain runs to 2896 residues: 3'-5' exoribonuclease HELZ2 (2896 aa).

2 C3H1-type zinc fingers span residues 90 to 114 (VCHY…RSRE) and 217 to 246 (GQPP…HSAV). Residues 287-311 (LYCPACLVTCHSQEAFENHCASSEH) form a C2H2-type; atypical zinc finger. Residues 327–357 (SPPPGLSKFELCPKPDLCEYGDACTKAHSAQ) form a C3H1-type 3 zinc finger. Positions 770–1126 (VALIAGWGPG…VVLSTVHTCQ (357 aa)) constitute a UvrD-like helicase ATP-binding domain. 791–798 (GPFGTGKT) contacts ATP. Residues 810–1306 (RRPETKVLIC…ESTEAEDAEA (497 aa)) form an interaction with THRAP3 region. The DEAA box motif lies at 914 to 917 (DEAA). Residue serine 1253 is modified to Phosphoserine. 3 consecutive short sequence motifs (LXXLL motif) follow at residues 1322 to 1326 (LRELL), 1365 to 1369 (LRKLL), and 1420 to 1424 (LVQLL). In terms of domain architecture, RNB spans 1581 to 1938 (REDCRAFLTF…VLQRQILLAL (358 aa)). The short motif at 2259 to 2263 (LEGLP) is the LXXLL motif 4 element. The interaction with THRAP3 stretch occupies residues 2382–2896 (PSRFLERQTY…RVCRRPTMPS (515 aa)). The UvrD-like helicase ATP-binding 2 domain maps to 2400 to 2675 (LNPSQNVAVR…HMLDTQYRMH (276 aa)). An ATP-binding site is contributed by 2421–2428 (GPPGTGKT). Positions 2476–2480 (LAGLL) match the LXXLL motif 5 motif.

Belongs to the DNA2/NAM7 helicase family. In terms of assembly, interacts with PPARA (via DNA-binding domain) and PPARG; the interaction stimulates the transcriptional activity of PPARA and PPARG. Interacts with THRAP3; the interaction is direct and HELZ2 and THRAP3 synergistically enhance the transcriptional activity of PPARG. It is probably part of the peroxisome proliferator activated receptor alpha interacting complex (PRIC). Expressed in various tissues including heart, pancreas, skeletal muscle, colon, spleen, liver, kidney, lung, peripheral blood and placenta.

It localises to the cytoplasm. The catalysed reaction is Exonucleolytic cleavage in the 3'- to 5'-direction to yield nucleoside 5'-phosphates.. It catalyses the reaction ATP + H2O = ADP + phosphate + H(+). Can degrade highly structured RNAs through its concerted ATP-dependent RNA helicase and 3' to 5' exoribonuclease activities. Shows a strong preference for pyrimidine over purine residues for its nuclease activity. Acts as a transcriptional coactivator for a number of nuclear receptors including PPARA, PPARG, THRA, THRB and RXRA. The polypeptide is 3'-5' exoribonuclease HELZ2 (Homo sapiens (Human)).